Here is a 724-residue protein sequence, read N- to C-terminus: Probable serine/threonine-protein kinase KKQ8 (724 aa).

Disordered regions lie at residues 1–81 (MVMQ…RQRS) and 93–188 (HPFR…KDIL). Ser-19 is modified (phosphoserine). A compositionally biased stretch (low complexity) spans 45 to 54 (PYRSSSTSPK). Over residues 95 to 106 (FRQTGSGASNSP) the composition is skewed to polar residues. Positions 143–162 (RSSSVSSCDSSNGTTSSSDS) are enriched in low complexity. Ser-232, Ser-238, and Ser-241 each carry phosphoserine. The disordered stretch occupies residues 329–355 (SQTNHEKRTGQSPNDSNRSSPTQGRED). The span at 338 to 351 (GQSPNDSNRSSPTQ) shows a compositional bias: polar residues. Positions 412 to 712 (GHPVGLVGAG…VGKLLDMQWM (301 aa)) constitute a Protein kinase domain. Residues 418–426 (VGAGAYGEV) and Lys-455 contribute to the ATP site. Asp-563 (proton acceptor) is an active-site residue.

The protein belongs to the protein kinase superfamily. CAMK Ser/Thr protein kinase family. NPR/HAL subfamily. HAL5 sub-subfamily.

It is found in the cytoplasm. The catalysed reaction is L-seryl-[protein] + ATP = O-phospho-L-seryl-[protein] + ADP + H(+). It carries out the reaction L-threonyl-[protein] + ATP = O-phospho-L-threonyl-[protein] + ADP + H(+). The chain is Probable serine/threonine-protein kinase KKQ8 (KKQ8) from Saccharomyces cerevisiae (strain ATCC 204508 / S288c) (Baker's yeast).